Consider the following 627-residue polypeptide: Glutamine--fructose-6-phosphate aminotransferase [isomerizing] (627 aa).

Catalysis depends on Cys-2, which acts as the Nucleophile; for GATase activity. In terms of domain architecture, Glutamine amidotransferase type-2 spans 2–224; it reads CGIVGYIGTQ…NGEIARLTPL (223 aa). 2 SIS domains span residues 293 to 442 and 476 to 617; these read LPEN…HRQT and LAHE…VDQP. Residue Lys-622 is the For Fru-6P isomerization activity of the active site.

Homodimer.

The protein localises to the cytoplasm. It catalyses the reaction D-fructose 6-phosphate + L-glutamine = D-glucosamine 6-phosphate + L-glutamate. Functionally, catalyzes the first step in hexosamine metabolism, converting fructose-6P into glucosamine-6P using glutamine as a nitrogen source. This chain is Glutamine--fructose-6-phosphate aminotransferase [isomerizing], found in Nostoc sp. (strain PCC 9229).